We begin with the raw amino-acid sequence, 574 residues long: MAHKTAGQAMTELLEQWGVDHVYGIPGDSINEFIEELRHERNQLKFIQTRHEEVAALAAAAEAKLTGKIGVCLSIAGPGAVHLLNGLYDAKADGAPVLAIAGQVSSGEVGRDYFQEIKLEQMFEDVAVFNREVHSAESLPDLLNQAIRTAYSKKGVAVLSVSDDLFAEKIKREPVYTSPVYIEGNLEPKKEQLVTCAQYINNAKKPIILAGQGMKKAKRELLEFADKAAAPIVVTLPAKGVVPDKHPHFLGNLGQIGTKPAYEAMEECDLLIMLGTSFPYRDYLPDDTPAIQLDSDPAKIGKRYPVTAGLVCDSALGLRELTEYIERKEDRRFLNACTEHMQHWWNEIEKDETEATTPLKPQQVVARLQEAAADDAVLSVDVGTVTVWMARHFKMNANQDFIVSSWLATMGCGLPGAIAASLSEPERQAIAVCGDGGFSMVMQDLPTAVKYKLPITVVILNNENLGMIEYEQQVKGNIDYVTKLQNVDYAAFAESCGAKGIKVTKAEELAPAFHEALHSDQPVVVDVMIGNEPPLPGKITYGQAKGFSKYMLKNFFENQKFEMPSLKKSLKRLF.

The stretch at D28–A55 forms a coiled coil. E52 serves as a coordination point for thiamine diphosphate. FAD is bound by residues I256–S277 and D294–D313. Residues T384 to N464 form a thiamine pyrophosphate binding region. Mg(2+)-binding residues include D435 and N462.

This sequence belongs to the TPP enzyme family. Mg(2+) serves as cofactor. The cofactor is thiamine diphosphate.

In Bacillus subtilis (strain 168), this protein is Putative thiamine pyrophosphate-containing protein YdaP (ydaP).